Consider the following 60-residue polypeptide: Toxin C10S2C2 (60 aa).

Disulfide bonds link Cys3–Cys22, Cys17–Cys39, Cys41–Cys52, and Cys53–Cys58. Residues 41-48 (CPTAMWPY) form an important for binding to L-type calcium channels region.

This sequence belongs to the three-finger toxin family. Short-chain subfamily. L-type calcium blocker sub-subfamily. In terms of tissue distribution, expressed by the venom gland.

Its subcellular location is the secreted. Functionally, this specific blocker of the L-type calcium channel (Cav1/CACNA1) is a smooth muscle relaxant and an inhibitor of cardiac contractions. This is Toxin C10S2C2 from Dendroaspis angusticeps (Eastern green mamba).